The chain runs to 1588 residues: Centrosomal protein of 170 kDa (1588 aa).

An FHA domain is found at Ile23–Ile73. 4 disordered regions span residues Leu121 to Gly172, Lys299 to Thr323, Gln338 to Ser447, and Ser461 to Ser508. A Phosphoserine modification is found at Ser141. Residues Glu155–Met164 are compositionally biased toward basic and acidic residues. Over residues Glu347–Lys357 the composition is skewed to basic and acidic residues. Phosphoserine occurs at positions 355 and 358. Tyr363 is modified (phosphotyrosine). The span at Lys407 to Glu418 shows a compositional bias: basic and acidic residues. Ser443, Ser463, and Ser494 each carry phosphoserine. Thr498 is modified (phosphothreonine). Residues Ser568, Ser577, Ser628, and Ser631 each carry the phosphoserine modification. Residues Glu602 to Val854 are disordered. Residues Leu620–Ser631 show a composition bias toward polar residues. Thr639 is modified (phosphothreonine). A compositionally biased stretch (basic and acidic residues) spans Asn645–Arg654. Ser662 is subject to Phosphoserine. Residues Glu663–Leu691 are compositionally biased toward basic and acidic residues. Residue Ser718 is modified to Phosphoserine. Basic and acidic residues predominate over residues Ser720–Ser731. Residue Thr752 is modified to Phosphothreonine. Composition is skewed to basic and acidic residues over residues His764 to Lys774 and Ser789 to Ser821. Positions Lys822–Ile839 are enriched in polar residues. A phosphoserine mark is found at Ser829, Ser870, and Ser872. Positions Ile844 to Glu1588 are targeting to microtubules. Over residues Leu899–Glu908 the composition is skewed to basic and acidic residues. Disordered regions lie at residues Leu899–Arg1222 and Ala1228–Leu1247. 2 positions are modified to phosphothreonine: Thr906 and Thr912. Residues Pro913–Thr937 are compositionally biased toward polar residues. Phosphoserine is present on residues Ser922, Ser925, and Ser950. Positions Asp967–Lys980 are enriched in basic and acidic residues. Residue Ser1008 is modified to Phosphoserine. At Thr1012 the chain carries Phosphothreonine. Over residues Ile1028–Cys1038 the composition is skewed to polar residues. Residue Thr1047 is modified to Phosphothreonine. At Ser1048 the chain carries Phosphoserine. Basic and acidic residues predominate over residues Ala1049–Lys1062. A compositionally biased stretch (low complexity) spans Ser1075–Leu1093. Ser1102, Ser1104, Ser1122, Ser1123, Ser1135, Ser1150, and Ser1155 each carry phosphoserine. Residues Asp1103 to Glu1588 are targeting to centrosomes. The segment covering Ala1112 to Pro1128 has biased composition (low complexity). Low complexity predominate over residues Glu1158–Ala1173. Phosphoserine is present on residues Ser1188, Ser1195, Ser1200, Ser1229, Ser1231, Ser1241, Ser1260, and Ser1270. The segment covering Thr1191–Ser1218 has biased composition (polar residues). Positions Ser1315–Pro1334 are disordered. Ser1362 is modified (phosphoserine). The segment at Pro1370–Leu1398 is disordered. Residues Lys1467–Asp1495 adopt a coiled-coil conformation. The tract at residues Ala1511–Glu1540 is disordered. Residues Lys1518–Pro1534 are compositionally biased toward polar residues. 2 positions are modified to phosphoserine: Ser1521 and Ser1522.

This sequence belongs to the CEP170 family. In terms of assembly, interacts with CCDC68 and CCDC120; leading to recruitment to centrosomes. Interacts with PLK1. Interacts with NIN. Interacts with FHDC1. Interacts with CCDC61. Interacts with TBK1; efficient complex formation may be dependent on the presence of CCDC61. Post-translationally, phosphorylated; probably by PLK1.

The protein resides in the cytoplasm. It is found in the cytoskeleton. The protein localises to the microtubule organizing center. It localises to the centrosome. Its subcellular location is the centriole. The protein resides in the spindle. Its function is as follows. Plays a role in microtubule organization. Required for centriole subdistal appendage assembly. The protein is Centrosomal protein of 170 kDa (Cep170) of Mus musculus (Mouse).